A 275-amino-acid chain; its full sequence is 4-diphosphocytidyl-2-C-methyl-D-erythritol kinase (275 aa).

Lysine 9 is a catalytic residue. 90–100 is a binding site for ATP; it reads PVGGGLGGGSS. Aspartate 132 is an active-site residue.

This sequence belongs to the GHMP kinase family. IspE subfamily.

The catalysed reaction is 4-CDP-2-C-methyl-D-erythritol + ATP = 4-CDP-2-C-methyl-D-erythritol 2-phosphate + ADP + H(+). The protein operates within isoprenoid biosynthesis; isopentenyl diphosphate biosynthesis via DXP pathway; isopentenyl diphosphate from 1-deoxy-D-xylulose 5-phosphate: step 3/6. Its function is as follows. Catalyzes the phosphorylation of the position 2 hydroxy group of 4-diphosphocytidyl-2C-methyl-D-erythritol. The protein is 4-diphosphocytidyl-2-C-methyl-D-erythritol kinase of Sulfurihydrogenibium sp. (strain YO3AOP1).